A 425-amino-acid chain; its full sequence is Enolase (425 aa).

Glutamine 163 is a (2R)-2-phosphoglycerate binding site. Glutamate 205 (proton donor) is an active-site residue. Positions 242, 285, and 312 each coordinate Mg(2+). (2R)-2-phosphoglycerate is bound by residues lysine 337, arginine 366, serine 367, and lysine 388. The active-site Proton acceptor is the lysine 337.

Belongs to the enolase family. It depends on Mg(2+) as a cofactor.

Its subcellular location is the cytoplasm. The protein localises to the secreted. The protein resides in the cell surface. It catalyses the reaction (2R)-2-phosphoglycerate = phosphoenolpyruvate + H2O. The protein operates within carbohydrate degradation; glycolysis; pyruvate from D-glyceraldehyde 3-phosphate: step 4/5. Functionally, catalyzes the reversible conversion of 2-phosphoglycerate (2-PG) into phosphoenolpyruvate (PEP). It is essential for the degradation of carbohydrates via glycolysis. In Cereibacter sphaeroides (strain ATCC 17025 / ATH 2.4.3) (Rhodobacter sphaeroides), this protein is Enolase.